Reading from the N-terminus, the 149-residue chain is Large ribosomal subunit protein bL9 (149 aa).

This sequence belongs to the bacterial ribosomal protein bL9 family.

Its function is as follows. Binds to the 23S rRNA. The sequence is that of Large ribosomal subunit protein bL9 from Helicobacter pylori (strain G27).